The sequence spans 88 residues: Small ribosomal subunit protein uS17 (88 aa).

This sequence belongs to the universal ribosomal protein uS17 family. As to quaternary structure, part of the 30S ribosomal subunit.

Its function is as follows. One of the primary rRNA binding proteins, it binds specifically to the 5'-end of 16S ribosomal RNA. The protein is Small ribosomal subunit protein uS17 of Nitratidesulfovibrio vulgaris (strain ATCC 29579 / DSM 644 / CCUG 34227 / NCIMB 8303 / VKM B-1760 / Hildenborough) (Desulfovibrio vulgaris).